The primary structure comprises 729 residues: 1,4-alpha-glucan branching enzyme GlgB (729 aa).

Residue aspartate 408 is the Nucleophile of the active site. Glutamate 461 (proton donor) is an active-site residue.

Belongs to the glycosyl hydrolase 13 family. GlgB subfamily. As to quaternary structure, monomer.

The enzyme catalyses Transfers a segment of a (1-&gt;4)-alpha-D-glucan chain to a primary hydroxy group in a similar glucan chain.. It functions in the pathway glycan biosynthesis; glycogen biosynthesis. Its function is as follows. Catalyzes the formation of the alpha-1,6-glucosidic linkages in glycogen by scission of a 1,4-alpha-linked oligosaccharide from growing alpha-1,4-glucan chains and the subsequent attachment of the oligosaccharide to the alpha-1,6 position. In Vibrio cholerae serotype O1 (strain ATCC 39315 / El Tor Inaba N16961), this protein is 1,4-alpha-glucan branching enzyme GlgB.